Here is a 671-residue protein sequence, read N- to C-terminus: DNA ligase (671 aa).

NAD(+) is bound by residues 32–36, 81–82, and glutamate 113; these read DAEYD and SL. Lysine 115 (N6-AMP-lysine intermediate) is an active-site residue. Arginine 136, glutamate 173, lysine 290, and lysine 314 together coordinate NAD(+). Residues cysteine 408, cysteine 411, cysteine 426, and cysteine 432 each contribute to the Zn(2+) site. One can recognise a BRCT domain in the interval 593-671; that stretch reads EIDSPFAGKT…EAEMIRLLGA (79 aa).

This sequence belongs to the NAD-dependent DNA ligase family. LigA subfamily. Mg(2+) serves as cofactor. Requires Mn(2+) as cofactor.

The enzyme catalyses NAD(+) + (deoxyribonucleotide)n-3'-hydroxyl + 5'-phospho-(deoxyribonucleotide)m = (deoxyribonucleotide)n+m + AMP + beta-nicotinamide D-nucleotide.. In terms of biological role, DNA ligase that catalyzes the formation of phosphodiester linkages between 5'-phosphoryl and 3'-hydroxyl groups in double-stranded DNA using NAD as a coenzyme and as the energy source for the reaction. It is essential for DNA replication and repair of damaged DNA. This chain is DNA ligase, found in Salmonella paratyphi B (strain ATCC BAA-1250 / SPB7).